We begin with the raw amino-acid sequence, 364 residues long: MTNKRKSAKPLEPAKRAPKPRTKKSRDLSASESNCDFVKVTRAGLHSRNKHQGRYDFAKLTQALPSLAPFVIKNPKGEASISFSDSTAVKMLNKALLSAYYQVANWDIPAGYLCPPIPGRADYIHRLAELLEGEVKGKFPHEKVQALDIGVGANAIYPIIAICDYRWRYTGSDVDPKSIESAQRIADSNPVLQGQLELKLQDQSQHIFQGIIGPTDYFHVTTCNPPFHASAQEAAFGTQRKLDNLAANRLKKGVTAKAGSQKISKNKPILNFGGQNSELWCQGGESSFLKRMANESERFAHQVLWFSTLVSKKDNVRPLRKQLEKLGVRSIRVVEMSQGQKVSRFVAWSFMDKQQRGEWIKLRG.

The disordered stretch occupies residues 1 to 30; that stretch reads MTNKRKSAKPLEPAKRAPKPRTKKSRDLSA.

Belongs to the methyltransferase superfamily. METTL16/RlmF family.

The protein resides in the cytoplasm. The enzyme catalyses adenosine(1618) in 23S rRNA + S-adenosyl-L-methionine = N(6)-methyladenosine(1618) in 23S rRNA + S-adenosyl-L-homocysteine + H(+). Its function is as follows. Specifically methylates the adenine in position 1618 of 23S rRNA. This chain is Ribosomal RNA large subunit methyltransferase F, found in Vibrio vulnificus (strain CMCP6).